Reading from the N-terminus, the 258-residue chain is Imidazole glycerol phosphate synthase subunit HisF (258 aa).

Catalysis depends on residues D11 and D130.

This sequence belongs to the HisA/HisF family. Heterodimer of HisH and HisF.

The protein localises to the cytoplasm. The catalysed reaction is 5-[(5-phospho-1-deoxy-D-ribulos-1-ylimino)methylamino]-1-(5-phospho-beta-D-ribosyl)imidazole-4-carboxamide + L-glutamine = D-erythro-1-(imidazol-4-yl)glycerol 3-phosphate + 5-amino-1-(5-phospho-beta-D-ribosyl)imidazole-4-carboxamide + L-glutamate + H(+). The protein operates within amino-acid biosynthesis; L-histidine biosynthesis; L-histidine from 5-phospho-alpha-D-ribose 1-diphosphate: step 5/9. IGPS catalyzes the conversion of PRFAR and glutamine to IGP, AICAR and glutamate. The HisF subunit catalyzes the cyclization activity that produces IGP and AICAR from PRFAR using the ammonia provided by the HisH subunit. The chain is Imidazole glycerol phosphate synthase subunit HisF from Shigella sonnei (strain Ss046).